Reading from the N-terminus, the 130-residue chain is MARDVEAQLNYIESLISSVDAQIDAINKMVLEVQTTIQILSSDELRQSKERLISVGSGIFANGNLDLDSDLIVPIGSGVYIAEKRSETIERLKANIENLKESIQKLMDQRRTLVDQYNTVYTTEATRNIK.

This sequence belongs to the prefoldin subunit alpha family. As to quaternary structure, heterohexamer of two alpha and four beta subunits.

Its subcellular location is the cytoplasm. In terms of biological role, molecular chaperone capable of stabilizing a range of proteins. Seems to fulfill an ATP-independent, HSP70-like function in archaeal de novo protein folding. The sequence is that of Prefoldin subunit alpha from Thermoplasma volcanium (strain ATCC 51530 / DSM 4299 / JCM 9571 / NBRC 15438 / GSS1).